An 845-amino-acid polypeptide reads, in one-letter code: MIDRKYIRLGEDDEDDGFPVFFPVLSVCEEDEDFKVKEDHMQEEMPILALRNMILFPGVAMPIMVGREKSLKLIRYVEKKGVYFGAVSQRDMDVEEPDRADLYDVGVVAEIIRVLEMPDGTTTAIVQGRQRFALQEITATEPFMKGRVKLLPDILPGKNKDHEFEALVSTIQDMSLKMMELMVERPPRELILSMRRNKNPMYQINFASANISTSIAVKQELLEISKMKDRGYRLLYLLHKELQVMELKASIQMKTREEMDKQQKEYFLQQQIKTIQEELGGNINDIEVQELRTKATTMKWSSEVAETFEKELRKLERLHPQSPDYSVQMQYVQTIISLPWGVFSKDNFNLKRAQSVLDRDHFGLEKVKERIIEHLAVLKMKGDMKSPIICLYGPPGVGKTSLGKSIAESLGRKYVRISLGGLHDEAEIRGHRRTYIGAMCGRIIQSLQRAGTSNPVFVLDEIDKIDSDYKGDPSSALLEVLDPEQNNAFHDNYLDIDFDLSHVLFIATANSLSSISRPLLDRMELIDVSGYIIEEKVEIAARHLIPKQLVEHGFRKNDIKFSKKTIEKLIDDYTRESGVRTLEKQIAAVIRKITKEAAMNVVHTTKVEPSDLVTFLGAPRYTRDRYQGNGDAGVVIGLAWTSVGGEILFIETSLHRGREPKLTLTGNLGDVMKESAVIALDYIRAHSDELGISQEIFNNWQVHVHVPEGAIPKDGPSAGITMVTSLVSALTRRKVRAGIAMTGEITLRGKVLPVGGIKEKILAAKRSGITEIILCEENRKDIEEINDIYLKGLKFHYVSNINEVLKEALLEEKVIDTTDIYSFGKKTEEEKAEKVEKTEKKQRKK.

The region spanning 45–242 is the Lon N-terminal domain; the sequence is MPILALRNMI…RLLYLLHKEL (198 aa). 393–400 serves as a coordination point for ATP; sequence GPPGVGKT. The Lon proteolytic domain maps to 629–811; it reads NGDAGVVIGL…NEVLKEALLE (183 aa). Residues Ser-717 and Lys-760 contribute to the active site.

This sequence belongs to the peptidase S16 family. Homohexamer. Organized in a ring with a central cavity.

It is found in the cytoplasm. It catalyses the reaction Hydrolysis of proteins in presence of ATP.. ATP-dependent serine protease that mediates the selective degradation of mutant and abnormal proteins as well as certain short-lived regulatory proteins. Required for cellular homeostasis and for survival from DNA damage and developmental changes induced by stress. Degrades polypeptides processively to yield small peptide fragments that are 5 to 10 amino acids long. Binds to DNA in a double-stranded, site-specific manner. In Porphyromonas gingivalis (strain ATCC 33277 / DSM 20709 / CIP 103683 / JCM 12257 / NCTC 11834 / 2561), this protein is Lon protease.